The following is a 504-amino-acid chain: 26S proteasome non-ATPase regulatory subunit 3 (504 aa).

The region spanning 254–433 (ARYMYYQGRI…RDGPRYMQSS (180 aa)) is the PCI domain.

The protein belongs to the proteasome subunit S3 family. In terms of assembly, the 26S proteasome is composed of a core protease, known as the 20S proteasome, capped at one or both ends by the 19S regulatory complex (RC). The RC is composed of at least 18 different subunits in two subcomplexes, the base and the lid, which form the portions proximal and distal to the 20S proteolytic core, respectively.

Acts as a regulatory subunit of the 26 proteasome which is involved in the ATP-dependent degradation of ubiquitinated proteins. This chain is 26S proteasome non-ATPase regulatory subunit 3 (rpn-3), found in Caenorhabditis elegans.